A 650-amino-acid polypeptide reads, in one-letter code: Chaperone protein DnaK (650 aa).

At Thr200 the chain carries Phosphothreonine; by autocatalysis. The span at 611 to 636 shows a compositional bias: low complexity; it reads AQQAGAAGAAGAAAEGASAQGGAQPA. Residues 611–650 are disordered; the sequence is AQQAGAAGAAGAAAEGASAQGGAQPADDVVDADFKEVKKD.

The protein belongs to the heat shock protein 70 family.

Acts as a chaperone. The protein is Chaperone protein DnaK of Burkholderia mallei (strain NCTC 10247).